The sequence spans 669 residues: DNA ligase (669 aa).

Residues 34 to 38 (DAEYD), 83 to 84 (SL), and E114 each bind NAD(+). K116 acts as the N6-AMP-lysine intermediate in catalysis. Residues R137, E171, K287, and K311 each contribute to the NAD(+) site. 4 residues coordinate Zn(2+): C405, C408, C423, and C428. The BRCT domain occupies 591–669 (NVESYFAGKT…EERFLQELNK (79 aa)).

Belongs to the NAD-dependent DNA ligase family. LigA subfamily. Mg(2+) serves as cofactor. The cofactor is Mn(2+).

The enzyme catalyses NAD(+) + (deoxyribonucleotide)n-3'-hydroxyl + 5'-phospho-(deoxyribonucleotide)m = (deoxyribonucleotide)n+m + AMP + beta-nicotinamide D-nucleotide.. Its function is as follows. DNA ligase that catalyzes the formation of phosphodiester linkages between 5'-phosphoryl and 3'-hydroxyl groups in double-stranded DNA using NAD as a coenzyme and as the energy source for the reaction. It is essential for DNA replication and repair of damaged DNA. This chain is DNA ligase, found in Bacillus cereus (strain G9842).